The chain runs to 256 residues: Small ribosomal subunit protein eS1 (256 aa).

An N-acetylalanine; partial modification is found at A2.

The protein belongs to the eukaryotic ribosomal protein eS1 family. As to quaternary structure, component of the small ribosomal subunit. Mature ribosomes consist of a small (40S) and a large (60S) subunit. The 40S subunit contains about 33 different proteins and 1 molecule of RNA (18S). The 60S subunit contains about 49 different proteins and 3 molecules of RNA (25S, 5.8S and 5S).

Its subcellular location is the cytoplasm. This is Small ribosomal subunit protein eS1 from Komagataella phaffii (strain GS115 / ATCC 20864) (Yeast).